Consider the following 301-residue polypeptide: Ethylmalonyl-CoA decarboxylase (301 aa).

K211 is modified (N6-acetyllysine; alternate). K211 bears the N6-succinyllysine; alternate mark. K295 is subject to N6-succinyllysine.

The protein belongs to the enoyl-CoA hydratase/isomerase family.

The protein resides in the cytoplasm. It localises to the cytosol. The catalysed reaction is (2S)-ethylmalonyl-CoA + H(+) = butanoyl-CoA + CO2. It carries out the reaction (S)-methylmalonyl-CoA + H(+) = propanoyl-CoA + CO2. It catalyses the reaction (2R)-ethylmalonyl-CoA + H(+) = butanoyl-CoA + CO2. Functionally, decarboxylates ethylmalonyl-CoA, a potentially toxic metabolite, to form butyryl-CoA, suggesting it might be involved in metabolite proofreading. Acts preferentially on (S)-ethylmalonyl-CoA but also has some activity on the (R)-isomer. Also has methylmalonyl-CoA decarboxylase activity at lower level. The chain is Ethylmalonyl-CoA decarboxylase (ECHDC1) from Pongo abelii (Sumatran orangutan).